Consider the following 695-residue polypeptide: NADPH--cytochrome P450 reductase (695 aa).

Topologically, residues 1-8 are lumenal; it reads MAQLDTLD. The chain crosses the membrane as a helical span at residues 9-31; that stretch reads IVVLVVLLVGSVAYFTKGSYWAV. At 32–695 the chain is on the cytoplasmic side; the sequence is PKDPYAAANS…SGSYQEDVWS (664 aa). Positions 66 to 221 constitute a Flavodoxin-like domain; sequence CVIFYGSQTG…DFLAWKEPMW (156 aa). Residues 72–77, 123–126, 169–178, and D204 each bind FMN; these read SQTGTA, ATYG, and LGNNTYEHYN. Residues 277–538 enclose the FAD-binding FR-type domain; it reads HNPYIAPIVE…HVRHSNFKLP (262 aa). An NADP(+)-binding site is contributed by R296. Residues 451–454, 469–471, and 486–489 each bind FAD; these read RYYS, TAV, and GVTT. Residues T552, 614-615, 620-624, and E656 contribute to the NADP(+) site; these read SR and KVYVQ. Residue W694 coordinates FAD.

This sequence belongs to the NADPH--cytochrome P450 reductase family. It in the N-terminal section; belongs to the flavodoxin family. In the C-terminal section; belongs to the flavoprotein pyridine nucleotide cytochrome reductase family. FAD is required as a cofactor. It depends on FMN as a cofactor.

Its subcellular location is the endoplasmic reticulum membrane. It is found in the mitochondrion outer membrane. It localises to the cell membrane. It carries out the reaction 2 oxidized [cytochrome P450] + NADPH = 2 reduced [cytochrome P450] + NADP(+) + H(+). Functionally, this enzyme is required for electron transfer from NADP to cytochrome P450 in microsomes. It can also provide electron transfer to heme oxygenase and cytochrome B5. Involved in ergosterol biosynthesis. The sequence is that of NADPH--cytochrome P450 reductase from Aspergillus fumigatus (strain ATCC MYA-4609 / CBS 101355 / FGSC A1100 / Af293) (Neosartorya fumigata).